A 293-amino-acid chain; its full sequence is uncharacterized protein (293 aa).

The disordered stretch occupies residues 1 to 22 (MTFNEGVQIDTSTTSTSGSGGG). A helical membrane pass occupies residues 25–45 (LAIGGGLGGLLVVVVAMLLGV). Positions 243–265 (GDDRIQQQTTGRTNPETWTHGSA) are disordered. Polar residues predominate over residues 248-265 (QQQTTGRTNPETWTHGSA).

The protein resides in the membrane. This is an uncharacterized protein from Mycobacterium tuberculosis (strain CDC 1551 / Oshkosh).